Reading from the N-terminus, the 292-residue chain is NAD kinase (292 aa).

The active-site Proton acceptor is Asp-73. Residues 73 to 74 (DG), 147 to 148 (NE), His-158, Arg-175, Asp-177, 188 to 193 (TAYSLS), and Gln-247 each bind NAD(+).

This sequence belongs to the NAD kinase family. Requires a divalent metal cation as cofactor.

It is found in the cytoplasm. The enzyme catalyses NAD(+) + ATP = ADP + NADP(+) + H(+). Its function is as follows. Involved in the regulation of the intracellular balance of NAD and NADP, and is a key enzyme in the biosynthesis of NADP. Catalyzes specifically the phosphorylation on 2'-hydroxyl of the adenosine moiety of NAD to yield NADP. The sequence is that of NAD kinase from Salmonella dublin (strain CT_02021853).